Reading from the N-terminus, the 329-residue chain is 4-hydroxythreonine-4-phosphate dehydrogenase (329 aa).

2 residues coordinate substrate: His-136 and Thr-137. 3 residues coordinate a divalent metal cation: His-166, His-211, and His-266. Residues Lys-274, Asn-283, and Arg-292 each coordinate substrate.

It belongs to the PdxA family. Homodimer. Zn(2+) serves as cofactor. It depends on Mg(2+) as a cofactor. The cofactor is Co(2+).

The protein localises to the cytoplasm. It carries out the reaction 4-(phosphooxy)-L-threonine + NAD(+) = 3-amino-2-oxopropyl phosphate + CO2 + NADH. It functions in the pathway cofactor biosynthesis; pyridoxine 5'-phosphate biosynthesis; pyridoxine 5'-phosphate from D-erythrose 4-phosphate: step 4/5. In terms of biological role, catalyzes the NAD(P)-dependent oxidation of 4-(phosphooxy)-L-threonine (HTP) into 2-amino-3-oxo-4-(phosphooxy)butyric acid which spontaneously decarboxylates to form 3-amino-2-oxopropyl phosphate (AHAP). This is 4-hydroxythreonine-4-phosphate dehydrogenase from Shigella sonnei (strain Ss046).